The primary structure comprises 494 residues: UDP-N-acetylmuramate--L-alanine ligase (494 aa).

An ATP-binding site is contributed by 140–146; that stretch reads GTHGKTT.

It belongs to the MurCDEF family.

Its subcellular location is the cytoplasm. It catalyses the reaction UDP-N-acetyl-alpha-D-muramate + L-alanine + ATP = UDP-N-acetyl-alpha-D-muramoyl-L-alanine + ADP + phosphate + H(+). Its pathway is cell wall biogenesis; peptidoglycan biosynthesis. Cell wall formation. The protein is UDP-N-acetylmuramate--L-alanine ligase of Nostoc sp. (strain PCC 7120 / SAG 25.82 / UTEX 2576).